The chain runs to 568 residues: CDK5 and ABL1 enzyme substrate 1 (568 aa).

Residues 1-31 show a composition bias toward low complexity; that stretch reads MAAATATAGTAACSSSSSSRGGSTDAAATSG. 2 disordered regions span residues 1–94 and 130–169; these read MAAA…PGAR and PSLV…QEEL. The interaction with TDRD7 stretch occupies residues 1-98; sequence MAAATATAGT…TKPGARARLS (98 aa). Pro residues predominate over residues 33–45; sequence QPPPPPPATAPPE. Basic and acidic residues predominate over residues 46–56; it reads PLRKPRMDPRR. Positions 140-427 are interaction with CDK3; sequence PSQPPRSAPA…TTVIDYVKPS (288 aa). Serine 248 carries the post-translational modification Phosphoserine. Phosphoserine; by CDK2 and CDK3 is present on serine 274. Phosphothreonine is present on threonine 350.

This sequence belongs to the cyclin family. In terms of assembly, found in a complex with p53/TP53. Found in a number of complexes with CDK2, CDK3, CDK5, ABL1, TDRD7, CDK17, CCNA1, CCNE1 and TP73. Interacts with CDK2, CDK3, CDK5, ABL1 and TDRD7. Post-translationally, phosphorylated on Ser-274 by CCNE1/CDK3. Phosphorylated on serine/threonine residues by CDK5 and on tyrosine residues by ABL1. Also phosphorylated in vitro by CCNA1/CDK2, CCNE1/CDK2, CCNA1/CDK3 and CCNE1/CDK3. Ubiquitous. Expressed in postnatal day 1 (P1), in postmitotic neurons of the subplate, cortex (V/VI) and marginal zone; in postnatal day 7 (P7), in all layers of the cerebral cortex and in the CA1 and CA2 regions of the hippocampus (at protein level). Highly expressed in brain, kidney, liver and lung.

The protein localises to the nucleus. It is found in the cytoplasm. It localises to the cell projection. Its subcellular location is the growth cone. Cyclin-dependent kinase binding protein. Enhances cyclin-dependent kinase tyrosine phosphorylation by nonreceptor tyrosine kinases, such as that of CDK5 by activated ABL1, which leads to increased CDK5 activity and is critical for neuronal development, and that of CDK2 by WEE1, which leads to decreased CDK2 activity and growth inhibition. Positively affects neuronal outgrowth. Plays a role as a regulator for p53/p73-induced cell death. In Mus musculus (Mouse), this protein is CDK5 and ABL1 enzyme substrate 1 (Cables1).